Here is a 165-residue protein sequence, read N- to C-terminus: uncharacterized protein (165 aa).

The interval methionine 1–proline 36 is disordered. A helical transmembrane segment spans residues leucine 135–leucine 155.

Its subcellular location is the membrane. This is an uncharacterized protein from Homo sapiens (Human).